The sequence spans 226 residues: SPI-1 type 3 secretion system stator protein (226 aa).

In terms of assembly, the core secretion machinery of the T3SS is composed of approximately 20 different proteins, including cytoplasmic components, a base, an export apparatus and a needle. This subunit is part of the cytosolic complex. Interacts directly with InvC/SctN1 (T3SS-1 ATPase) and SpaO/SctQ (the major sorting platform component).

It localises to the cytoplasm. Component of the type III secretion system (T3SS), also called injectisome, which is used to inject bacterial effector proteins into eukaryotic host cells. Acts as a regulator of the InvC/SctN1 ATPase activity. Required for invasion and secretion. In Salmonella typhimurium (strain SL1344), this protein is SPI-1 type 3 secretion system stator protein.